The following is a 261-amino-acid chain: MKKPVVLRGQNLSLQFASRQVLKQIDVAFCAGEVVALLGPNGAGKSSLLKLLSGEITSSQSIEYFGKAAKSWRSAALSRHLGLLPQSSSLTFPFLAREVVELGAIPLALSQAEVKTIAEKYMAITDVVHLADSLYPALSGGEKQRLHFARVLTQLDQSGDKKILMLDEPTSALDLAHQHNTLRVAKQFAKEQNACVIVVLHDLNLAAQYADRMVILHRGEIVVDACPEEALTPEIIDAVYGYKAMIGRHPTLGFPLVQPAA.

The 237-residue stretch at Leu-7–Lys-243 folds into the ABC transporter domain. Gly-39–Ser-46 contacts ATP.

It belongs to the ABC transporter superfamily. Heme (hemin) importer (TC 3.A.1.14.5) family. As to quaternary structure, the complex is composed of two ATP-binding proteins (HmuV), two transmembrane proteins (HmuU) and a solute-binding protein (HmuT).

The protein resides in the cell inner membrane. In terms of biological role, part of the ABC transporter complex HmuTUV involved in hemin import. Responsible for energy coupling to the transport system. The polypeptide is Hemin import ATP-binding protein HmuV (Vibrio vulnificus (strain CMCP6)).